Consider the following 206-residue polypeptide: Regulator of rDNA transcription 14 (206 aa).

The disordered stretch occupies residues 178 to 206; sequence FVKDHRYPGLTPGLAPVGLSDEEDSSEED. Phosphoserine is present on residues Ser197, Ser202, and Ser203. The segment covering 197–206 has biased composition (acidic residues); the sequence is SDEEDSSEED.

The protein belongs to the RRT14 family.

It localises to the nucleus. The protein localises to the nucleolus. Its function is as follows. Involved in ribosome biogenesis, probably through modulation of rDNA transcription. The polypeptide is Regulator of rDNA transcription 14 (RRT14) (Saccharomyces cerevisiae (strain RM11-1a) (Baker's yeast)).